The chain runs to 495 residues: Ankyrin repeat domain-containing protein 34A (495 aa).

4 ANK repeats span residues 4 to 33 (TEGH…YVNE), 37 to 72 (QGET…DPNI), 76 to 106 (LGRT…DPSV), and 110 to 139 (AGAS…AKGT). The residue at position 15 (Q15) is an N5-methylglutamine. Composition is skewed to polar residues over residues 147 to 162 (DTSP…YLNS) and 180 to 191 (VCTSPSEVQLQT). The segment at 147–495 (DTSPSGTKKT…SLGGPGEPGR (349 aa)) is disordered. Residues 203–213 (AQEEEEKRDVF) are compositionally biased toward basic and acidic residues. The span at 223 to 232 (DPSPSEPLPK) shows a compositional bias: pro residues. Residues 233–242 (PPRHPPKPLK) are compositionally biased toward basic residues. Position 315 is a phosphothreonine (T315). Residues 375–385 (SVSSPRQSQES) are compositionally biased toward polar residues. The span at 462-472 (RTKRKLVRRHS) shows a compositional bias: basic residues. Residues 485 to 495 (QSLGGPGEPGR) show a composition bias toward gly residues.

Belongs to the ANKRD34 family. Methylated at Gln-15 by N6AMT1.

This chain is Ankyrin repeat domain-containing protein 34A (Ankrd34a), found in Rattus norvegicus (Rat).